We begin with the raw amino-acid sequence, 125 residues long: Fatty acid-binding protein, liver-type (125 aa).

Belongs to the calycin superfamily. Fatty-acid binding protein (FABP) family.

Its subcellular location is the cytoplasm. The chain is Fatty acid-binding protein, liver-type (fabp1) from Takifugu rubripes (Japanese pufferfish).